Here is a 116-residue protein sequence, read N- to C-terminus: Putative iron-sulfur cluster insertion protein ErpA (116 aa).

Residues Cys-44, Cys-108, and Cys-110 each contribute to the iron-sulfur cluster site.

Belongs to the HesB/IscA family. In terms of assembly, homodimer. Iron-sulfur cluster serves as cofactor.

In terms of biological role, required for insertion of 4Fe-4S clusters. The polypeptide is Putative iron-sulfur cluster insertion protein ErpA (Aromatoleum aromaticum (strain DSM 19018 / LMG 30748 / EbN1) (Azoarcus sp. (strain EbN1))).